Here is a 246-residue protein sequence, read N- to C-terminus: tRNA (guanine-N(7)-)-methyltransferase (246 aa).

Residues E77, E102, D129, and D152 each coordinate S-adenosyl-L-methionine. The active site involves D152. Substrate contacts are provided by residues K156, D188, and 225–228 (TKFE).

Belongs to the class I-like SAM-binding methyltransferase superfamily. TrmB family.

The catalysed reaction is guanosine(46) in tRNA + S-adenosyl-L-methionine = N(7)-methylguanosine(46) in tRNA + S-adenosyl-L-homocysteine. It functions in the pathway tRNA modification; N(7)-methylguanine-tRNA biosynthesis. Functionally, catalyzes the formation of N(7)-methylguanine at position 46 (m7G46) in tRNA. The protein is tRNA (guanine-N(7)-)-methyltransferase of Haemophilus influenzae (strain PittGG).